We begin with the raw amino-acid sequence, 1091 residues long: TATA element modulatory factor (1091 aa).

2 disordered regions span residues 42–86 (IPYG…KPVR) and 100–280 (FLSP…DAKS). Residues 57–81 (WDTSTWGLNSTSSEPQSPPTASQAI) are compositionally biased toward polar residues. A phosphoserine mark is found at S73, S78, S112, and S136. Composition is skewed to low complexity over residues 111-122 (KSPVVSKPPSKS), 131-142 (SSLQESSSPGQS), and 194-211 (SENV…TTST). The residue at position 213 (S213) is a Phosphoserine. Basic and acidic residues predominate over residues 217 to 234 (ETKDMALEPKEQKHEDRQ). Low complexity-rich tracts occupy residues 242–253 (VSSFSSGTSTTS) and 264–273 (ISESSASSRQ). Phosphoserine is present on residues S324, S326, S329, S334, S340, and S357. The interaction with Elongin BC complex stretch occupies residues 329-338 (SLDSRSVSEI). The interval 360-443 (TPKTKVVEST…NQPKAPPEKE (84 aa)) is disordered. Positions 368 to 379 (STEENAEEEEGN) are enriched in acidic residues. Phosphoserine is present on residues S411 and S540. Coiled-coil stretches lie at residues 443–767 (EDVC…STAR) and 824–894 (IQMS…SQLE). S923 and S926 each carry phosphoserine. A Phosphothreonine modification is found at T927. Phosphoserine is present on S931. Residues 984–1090 (IENLQSQLKL…QIDELLRQRL (107 aa)) adopt a coiled-coil conformation.

As to quaternary structure, component of the SNF/SWI transcription factor complexes. Interacts with RAB6A. Interacts with TCEB1. Interacts with STAT3 and FER. Interacts with TRNP1; may regulate TRNP1 proteasomal degradation. Post-translationally, phosphorylated by FER.

It localises to the cytoplasm. The protein localises to the nucleus. It is found in the golgi apparatus membrane. Its function is as follows. Potential coactivator of the androgen receptor. May play critical roles in two RAB6-dependent retrograde transport processes: one from endosomes to the Golgi and the other from the Golgi to the ER. Mediates STAT3 degradation. In Mus musculus (Mouse), this protein is TATA element modulatory factor (Tmf1).